Reading from the N-terminus, the 230-residue chain is Large ribosomal subunit protein uL1 (230 aa).

It belongs to the universal ribosomal protein uL1 family. In terms of assembly, part of the 50S ribosomal subunit.

In terms of biological role, binds directly to 23S rRNA. The L1 stalk is quite mobile in the ribosome, and is involved in E site tRNA release. Protein L1 is also a translational repressor protein, it controls the translation of the L11 operon by binding to its mRNA. In Bradyrhizobium diazoefficiens (strain JCM 10833 / BCRC 13528 / IAM 13628 / NBRC 14792 / USDA 110), this protein is Large ribosomal subunit protein uL1.